The primary structure comprises 870 residues: MSADPARAESGHTPMMQQYLRIKAEHPDTLVLYRMGDFYELFFDDARKAHRLLDITLTSRGQSAGEPVVMAGVPVHALENYLGKLVKLGESVAIAEQVGDVATAKGPVERKVVRVVTPGTVTDTELLSERVDTLLLAVTRQRASYGLAWLGLSSGTLGLSECGERELAGWLARLGPAEVLVDDRDDAALTAALSTTRTALTRRPAWQFDTALGRRKLCEQLRVASLAGFNAEDVSAAHAAAAALLSYAEHTQGRALAHVGSLAVERASDLLELPPATHRNLELTQTLRGEDAPTLLSLLDVCRTGMGSRALRHWLTHPARVRTAARARHEAIGALMERGGEVLREALRGVSDVERITARIALRQVRPRELTGLRATLLALPALRDGVPRDSALLADLAQQLSPPPEIADLLQRAIADEPAVLLRDGGVIATGHDAALDELRGIAQNCEAFLLDLEARERNRTGIANLRVQFNRVHGFYIEVTQGQVDKVPADYQRRQTLKNAERYITPELKAFEDKALSAQERALAREKLLYDGVLDALQPQLAALGAVARALASLDALAALAERAAVLNWCCPEFVSQPCIEIEQGRHPVVEARLAETGGGSFIPNDCRLDANRRMLVITGPNMGGKSTFMRQVALVVLLAAMGSYVPAAACRLGPVDAIHTRIGAADDLANAQSTFMLEMTEAAAIVHGATEHSLVLMDEIGRGTSTFDGLALAGAIASQLHDRNRAFTLFATHYFELTAFPEKHPRALNVHVSAAESHTGHGDDIVFLHEIQPGPASRSYGVQVARLAGMPAPLLRQARATLEALEAQQAASASQIDLFAAPPPSPPREATELERALAGVEPDTLTPREALDALYRLKSLHERSKEN.

622 to 629 (GPNMGGKS) is a binding site for ATP.

This sequence belongs to the DNA mismatch repair MutS family.

Its function is as follows. This protein is involved in the repair of mismatches in DNA. It is possible that it carries out the mismatch recognition step. This protein has a weak ATPase activity. The sequence is that of DNA mismatch repair protein MutS from Methylibium petroleiphilum (strain ATCC BAA-1232 / LMG 22953 / PM1).